The following is an 82-amino-acid chain: Cytotoxin homolog Clbp-3 (82 aa).

Positions 1-21 (MKTLLLTLVVVTIVCLDLGYT) are cleaved as a signal peptide. Cystine bridges form between cysteine 24-cysteine 43, cysteine 36-cysteine 60, cysteine 64-cysteine 75, and cysteine 76-cysteine 81.

The protein belongs to the three-finger toxin family. Short-chain subfamily. Orphan group XV sub-subfamily. As to expression, expressed by the venom gland.

Its subcellular location is the secreted. The protein resides in the target cell membrane. Has low cytotoxic activity. The sequence is that of Cytotoxin homolog Clbp-3 from Naja atra (Chinese cobra).